The sequence spans 179 residues: 3-hydroxyanthranilate 3,4-dioxygenase (179 aa).

Arginine 47 contributes to the O2 binding site. Fe cation contacts are provided by histidine 51, glutamate 57, and histidine 96. Glutamate 57 serves as a coordination point for substrate. The substrate site is built by arginine 100 and glutamate 110. 4 residues coordinate Fe cation: cysteine 125, cysteine 128, cysteine 162, and cysteine 165.

Belongs to the 3-HAO family. Fe(2+) serves as cofactor.

The enzyme catalyses 3-hydroxyanthranilate + O2 = (2Z,4Z)-2-amino-3-carboxymuconate 6-semialdehyde. It functions in the pathway cofactor biosynthesis; NAD(+) biosynthesis; quinolinate from L-kynurenine: step 3/3. Catalyzes the oxidative ring opening of 3-hydroxyanthranilate to 2-amino-3-carboxymuconate semialdehyde, which spontaneously cyclizes to quinolinate. The sequence is that of 3-hydroxyanthranilate 3,4-dioxygenase from Bacillus thuringiensis (strain Al Hakam).